Here is a 189-residue protein sequence, read N- to C-terminus: Elongation factor P (189 aa).

It belongs to the elongation factor P family.

It is found in the cytoplasm. The protein operates within protein biosynthesis; polypeptide chain elongation. In terms of biological role, involved in peptide bond synthesis. Stimulates efficient translation and peptide-bond synthesis on native or reconstituted 70S ribosomes in vitro. Probably functions indirectly by altering the affinity of the ribosome for aminoacyl-tRNA, thus increasing their reactivity as acceptors for peptidyl transferase. The protein is Elongation factor P of Ehrlichia chaffeensis (strain ATCC CRL-10679 / Arkansas).